The chain runs to 432 residues: Amino-acid acetyltransferase (432 aa).

The 140-residue stretch at 286–425 (EQLREAGIED…ASLYNFQRNS (140 aa)) folds into the N-acetyltransferase domain.

The protein belongs to the acetyltransferase family. ArgA subfamily.

It is found in the cytoplasm. It catalyses the reaction L-glutamate + acetyl-CoA = N-acetyl-L-glutamate + CoA + H(+). It participates in amino-acid biosynthesis; L-arginine biosynthesis; N(2)-acetyl-L-ornithine from L-glutamate: step 1/4. The protein is Amino-acid acetyltransferase of Pseudomonas aeruginosa (strain LESB58).